A 407-amino-acid polypeptide reads, in one-letter code: MAAATASSQLIFSKPYSPSRLCPFQLCVFDAKSVLSSSRRKHVNGSGVRCMAVKEATSETKKRSGYEIITLTSWLLQQEQKGIIDAELTIVLSSISMACKQIASLVQRANISNLTGTQGAVNIQGEDQKKLDVISNEVFSNCLRSSGRTGIIASEEEDVAVAVEESYSGNYIVVFDPLDGSSNLDAAVSTGSIFGIYSPNDECLPDFGDDSDDNTLGTEEQRCIVNVCQPGSNLLAAGYCMYSSSVAFVLTIGKGVFVFTLDPLYGEFVLTQENLQIPKSGEIYSFNEGNYKLWDENLKKYIDDLKEPGPSGKPYSARYIGSLVGDFHRTLLYGGIYGYPRDKKSKNGKLRLLYECAPMSFIVEQAGGKGSDGHQRVLDIQPTEIHQRVPLYIGSTEEVEKVEKYLA.

The N-terminal 50 residues, 1-50 (MAAATASSQLIFSKPYSPSRLCPFQLCVFDAKSVLSSSRRKHVNGSGVRC), are a transit peptide targeting the chloroplast. Mg(2+) is bound by residues Glu126, Glu155, Asp176, Leu178, and Asp179. 179-182 (DGSS) lines the substrate pocket. Cysteines 203 and 223 form a disulfide. Substrate contacts are provided by Asn287, Tyr319, Tyr337, Tyr339, and Lys349. Glu355 contacts Mg(2+).

Belongs to the FBPase class 1 family. Homotetramer. Mg(2+) is required as a cofactor.

The protein resides in the plastid. The protein localises to the chloroplast stroma. The catalysed reaction is beta-D-fructose 1,6-bisphosphate + H2O = beta-D-fructose 6-phosphate + phosphate. Its pathway is carbohydrate biosynthesis; Calvin cycle. The polypeptide is Fructose-1,6-bisphosphatase, chloroplastic (FBP) (Pisum sativum (Garden pea)).